The following is an 80-amino-acid chain: MAAGVTATELRELADDELVQKLKESKEELFNLRFQMATGQLENNRRLRVVRRDIARIYTIMRERELGLTVSPEGAEEGAA.

The protein belongs to the universal ribosomal protein uL29 family.

This is Large ribosomal subunit protein uL29 from Saccharopolyspora erythraea (strain ATCC 11635 / DSM 40517 / JCM 4748 / NBRC 13426 / NCIMB 8594 / NRRL 2338).